A 224-amino-acid polypeptide reads, in one-letter code: MLLKHFPHDEKPRERFIKYGPSSLSNHELVAILLRTGTKKESVLQISARLLQTFGGLRSVREATIEEMSKIRGVGKAKAISLLAALELGTRLHHQTTDNRYVIRTPEDGANFVMEDMRFLTQENFVCLYLNTKNQVLHKHTVFIGSLNSSIVHPREIFKEAFKRSAASFICVHNHPSGDPTPSREDIEVTQRLFECGKLIGIQLLDHLVIGDQKFVSLKEKGYL.

An MPN domain is found at 102 to 224; it reads VIRTPEDGAN…FVSLKEKGYL (123 aa). 3 residues coordinate Zn(2+): His173, His175, and Asp186. The JAMM motif motif lies at 173–186; sequence HNHPSGDPTPSRED.

It belongs to the UPF0758 family.

The protein is UPF0758 protein BPUM_2444 of Bacillus pumilus (strain SAFR-032).